The chain runs to 413 residues: Serine/threonine-protein phosphatase 7 (413 aa).

C28 and C67 are disulfide-bonded. Mn(2+) is bound by residues D84, H86, D113, and N145. H146 acts as the Proton donor in catalysis. H197 and H303 together coordinate Mn(2+). Residues 391 to 413 (NVIDSDDEMDKSAMDTNNEQPNS) are disordered. Residues 404–413 (MDTNNEQPNS) show a composition bias toward polar residues.

This sequence belongs to the PPP phosphatase family. PP-7 subfamily. In terms of assembly, monomer, homodimer, and heteromer. Interacts with calmodulin (CaM3 and CaM4) and HSFA1A/HSF1. Mn(2+) serves as cofactor. As to expression, expressed in leaves, and, to a lower extent, in stems and flowers.

It is found in the nucleus. It localises to the nucleoplasm. It catalyses the reaction O-phospho-L-seryl-[protein] + H2O = L-seryl-[protein] + phosphate. It carries out the reaction O-phospho-L-threonyl-[protein] + H2O = L-threonyl-[protein] + phosphate. Its activity is regulated as follows. Inhibited by NaF and orthovanadate, as well as by divalent cations such as Ni(2+) and Zn(2+). Inhibited by polylysine with myelin basic protein as substrate, but activated by polylysine with pNPP as substrate. Reversibly regulated by redox agents. Inhibited by submillimolar Pi concentrations. Slightly repressed by calmodulin (CaM). Phosphatase active on para-nitrophenylphosphate (pNPP) and on various phosphoproteins such as myelin basic protein. Seems to act as a positive regulator of cryptochrome signaling involved in hypocotyl growth inhibition and cotyledon expansion under white and blue light conditions. Confers thermotolerance. Required for heat shock mediated-signaling pathway that leads to the expression of heat shock proteins (HSPs). This chain is Serine/threonine-protein phosphatase 7 (PP7), found in Arabidopsis thaliana (Mouse-ear cress).